Consider the following 339-residue polypeptide: Anthranilate phosphoribosyltransferase (339 aa).

5-phospho-alpha-D-ribose 1-diphosphate contacts are provided by residues glycine 81, 84 to 85, serine 89, 91 to 94, 109 to 117, and alanine 121; these read GD, NVSS, and KHGNRALSS. Glycine 81 contributes to the anthranilate binding site. Serine 93 contacts Mg(2+). Residue asparagine 112 participates in anthranilate binding. Arginine 167 is an anthranilate binding site. Positions 225 and 226 each coordinate Mg(2+).

The protein belongs to the anthranilate phosphoribosyltransferase family. Homodimer. Mg(2+) serves as cofactor.

The enzyme catalyses N-(5-phospho-beta-D-ribosyl)anthranilate + diphosphate = 5-phospho-alpha-D-ribose 1-diphosphate + anthranilate. It functions in the pathway amino-acid biosynthesis; L-tryptophan biosynthesis; L-tryptophan from chorismate: step 2/5. In terms of biological role, catalyzes the transfer of the phosphoribosyl group of 5-phosphorylribose-1-pyrophosphate (PRPP) to anthranilate to yield N-(5'-phosphoribosyl)-anthranilate (PRA). The polypeptide is Anthranilate phosphoribosyltransferase (Brucella suis (strain ATCC 23445 / NCTC 10510)).